Here is a 372-residue protein sequence, read N- to C-terminus: Glutamate 5-kinase (372 aa).

Lys14 lines the ATP pocket. Substrate is bound by residues Ser54, Asp141, and Asn153. Residue 173–174 participates in ATP binding; the sequence is TD. One can recognise a PUA domain in the interval 280-358; it reads RGTLVLDDGA…DAIEALLGYV (79 aa).

The protein belongs to the glutamate 5-kinase family.

The protein localises to the cytoplasm. The enzyme catalyses L-glutamate + ATP = L-glutamyl 5-phosphate + ADP. The protein operates within amino-acid biosynthesis; L-proline biosynthesis; L-glutamate 5-semialdehyde from L-glutamate: step 1/2. Functionally, catalyzes the transfer of a phosphate group to glutamate to form L-glutamate 5-phosphate. The polypeptide is Glutamate 5-kinase (Pseudomonas paraeruginosa (strain DSM 24068 / PA7) (Pseudomonas aeruginosa (strain PA7))).